A 527-amino-acid chain; its full sequence is Glutamate--cysteine ligase (527 aa).

It belongs to the glutamate--cysteine ligase type 1 family. Type 1 subfamily.

The catalysed reaction is L-cysteine + L-glutamate + ATP = gamma-L-glutamyl-L-cysteine + ADP + phosphate + H(+). It participates in sulfur metabolism; glutathione biosynthesis; glutathione from L-cysteine and L-glutamate: step 1/2. This Pseudomonas paraeruginosa (strain DSM 24068 / PA7) (Pseudomonas aeruginosa (strain PA7)) protein is Glutamate--cysteine ligase.